A 398-amino-acid chain; its full sequence is O-methyltransferase mpaG' (398 aa).

Ser144 is a binding site for (4E,8E)-10-(4,6-dihydroxy-7-methyl-3-oxo-1,3-dihydro-2-benzofuran-5-yl)-4,8-dimethyldeca-4,8-dienoate. 4-farnesyl-3,5-dihydroxy-6-methylphthalide is bound at residue Ser144. Residue Ser144 coordinates 6-O-desmethylmycophenolate. Asn197 provides a ligand contact to S-adenosyl-L-homocysteine. Residue Tyr199 participates in (4E,8E)-10-(4,6-dihydroxy-7-methyl-3-oxo-1,3-dihydro-2-benzofuran-5-yl)-4,8-dimethyldeca-4,8-dienoate binding. Tyr199 is a binding site for 4-farnesyl-3,5-dihydroxy-6-methylphthalide. Tyr199 is a 6-O-desmethylmycophenolate binding site. Tyr203, Asp237, Gly239, His244, Asp245, Asp264, and Arg265 together coordinate S-adenosyl-L-homocysteine. Asp264 contacts S-adenosyl-L-methionine. Arg265 and Gln267 together coordinate (4E,8E)-10-(4,6-dihydroxy-7-methyl-3-oxo-1,3-dihydro-2-benzofuran-5-yl)-4,8-dimethyldeca-4,8-dienoate. Arg265 contacts 6-O-desmethylmycophenolate. Asp286, Ile287, and His302 together coordinate S-adenosyl-L-homocysteine. Ser303 lines the (4E,8E)-10-(4,6-dihydroxy-7-methyl-3-oxo-1,3-dihydro-2-benzofuran-5-yl)-4,8-dimethyldeca-4,8-dienoate pocket. Ser303 serves as a coordination point for 4-farnesyl-3,5-dihydroxy-6-methylphthalide. A 6-O-desmethylmycophenolate-binding site is contributed by Ser303. Catalysis depends on His306, which acts as the Proton acceptor. Active-site residues include Glu335 and Glu362.

The protein belongs to the class I-like SAM-binding methyltransferase superfamily. Cation-independent O-methyltransferase family. Homodimer.

Its subcellular location is the cytoplasm. It localises to the cytosol. It catalyses the reaction (4E,8E)-10-(4,6-dihydroxy-7-methyl-3-oxo-1,3-dihydro-2-benzofuran-5-yl)-4,8-dimethyldeca-4,8-dienoate + S-adenosyl-L-methionine = (4E,8E)-10-(4-hydroxy-6-methoxy-7-methyl-3-oxo-1,3-dihydro-2-benzofuran-5-yl)-4,8-dimethyldeca-4,8-dienoate + S-adenosyl-L-homocysteine + H(+). The catalysed reaction is 4-farnesyl-3,5-dihydroxy-6-methylphthalide + S-adenosyl-L-methionine = 4-farnesyl-3,5-dihydroxy-6-methoxylphthalide + S-adenosyl-L-homocysteine + H(+). It carries out the reaction 6-O-desmethylmycophenolate + S-adenosyl-L-methionine = mycophenolate + S-adenosyl-L-homocysteine + H(+). It functions in the pathway secondary metabolite biosynthesis; terpenoid biosynthesis. Its function is as follows. O-methyltransferase; part of the gene cluster that mediates the biosynthesis of mycophenolic acid (MPA), the first isolated antibiotic natural product in the world obtained from a culture of Penicillium brevicompactum in 1893. MpaG' catalyzes the 5-O-methylation of three precursors in MPA biosynthesis including demethylmycophenolic acid (DMMPA), 4-farnesyl-3,5-dihydroxy-6-methylphthalide (FDHMP), and an intermediate containing three fewer carbon atoms compared to FDHMP (FDHMP-3C) with different catalytic efficiencies. The first step of the pathway is the synthesis of 5-methylorsellinic acid (5MOA) by the cytosolic polyketide synthase mpaC. 5MOA is then converted to the phthalide compound 5,7-dihydroxy-4,6-dimethylphthalide (DHMP) by the endoplasmic reticulum-bound cytochrome P450 monooxygenase mpaDE. MpaDE first catalyzes hydroxylation of 5-MOA to 4,6-dihydroxy-2-(hydroxymethyl)-3-methylbenzoic acid (DHMB). MpaDE then acts as a lactone synthase that catalyzes the ring closure to convert DHMB into DHMP. The next step is the prenylation of DHMP by the Golgi apparatus-associated prenyltransferase mpaA to yield farnesyl-DHMP (FDHMP). The ER-bound oxygenase mpaB then mediates the oxidative cleavage the C19-C20 double bond in FDHMP to yield FDHMP-3C via a mycophenolic aldehyde intermediate. The O-methyltransferase mpaG catalyzes the methylation of FDHMP-3C to yield MFDHMP-3C. MpaG and mpaB can also switch the order in which they act and, in this case, the conversion of FDHMP to MFDHMP-3C can take place via 5-O-methyl-FDHMP (MFDHMP). After the cytosolic methylation of FDHMP-3C, MFDHMP-3C enters into peroxisomes probably via free diffusion due to its low molecular weight. Upon a peroxisomal CoA ligation reaction, catalyzed by a beta-oxidation component enzyme acyl-CoA ligase ACL891, MFDHMP-3C-CoA would then be restricted to peroxisomes for the following beta-oxidation pathway steps. The peroxisomal beta-oxidation machinery than converts MFDHMP-3C-CoA into MPA_CoA, via a beta-oxidation chain-shortening process. Finally mpaH acts as a peroxisomal acyl-CoA hydrolase with high substrate specificity toward MPA-CoA to release the final product MPA. MpaH can also hydrolyze DMMPA-CoA to release demethylmycophenolic acid (DMMPA) that is further converted to MPA by mpaG. This chain is O-methyltransferase mpaG', found in Penicillium brevicompactum.